The primary structure comprises 96 residues: Probable Fe(2+)-trafficking protein (96 aa).

The interval 21–40 (LPKMPHPPFPNKKGQELQET) is disordered.

It belongs to the Fe(2+)-trafficking protein family.

In terms of biological role, could be a mediator in iron transactions between iron acquisition and iron-requiring processes, such as synthesis and/or repair of Fe-S clusters in biosynthetic enzymes. The chain is Probable Fe(2+)-trafficking protein from Psychrobacter arcticus (strain DSM 17307 / VKM B-2377 / 273-4).